A 149-amino-acid chain; its full sequence is Ribonuclease VapC2 (149 aa).

Residues 11-149 (IFFDSNILIY…RVDFLEIIEI (139 aa)) enclose the PINc domain. The Mg(2+) site is built by D14 and D116.

It belongs to the PINc/VapC protein family. Mg(2+) serves as cofactor.

Functionally, toxic component of a type II toxin-antitoxin (TA) system. An RNase. Its cognate antitoxin is VapB2. This Methanocaldococcus jannaschii (strain ATCC 43067 / DSM 2661 / JAL-1 / JCM 10045 / NBRC 100440) (Methanococcus jannaschii) protein is Ribonuclease VapC2.